We begin with the raw amino-acid sequence, 144 residues long: Fluoride-specific ion channel FluC 1 (144 aa).

A run of 4 helical transmembrane segments spans residues 11–31, 44–64, 74–94, and 107–127; these read LIYI…YYLG, LATL…TTYI, VITG…TFSV, and IAFL…GLGY. Residues Gly84 and Thr87 each coordinate Na(+).

The protein belongs to the fluoride channel Fluc/FEX (TC 1.A.43) family.

The protein resides in the cell membrane. It catalyses the reaction fluoride(in) = fluoride(out). Its activity is regulated as follows. Na(+) is not transported, but it plays an essential structural role and its presence is essential for fluoride channel function. Functionally, fluoride-specific ion channel. Important for reducing fluoride concentration in the cell, thus reducing its toxicity. The sequence is that of Fluoride-specific ion channel FluC 1 from Bacillus cereus (strain ATCC 14579 / DSM 31 / CCUG 7414 / JCM 2152 / NBRC 15305 / NCIMB 9373 / NCTC 2599 / NRRL B-3711).